Consider the following 314-residue polypeptide: 3'-5' exoribonuclease YhaM (314 aa).

Positions 14-90 (VDLYLLIKSS…QLKLRNIRPA (77 aa)) form a DNA-binding region, OB. The HD domain occupies 163–279 (HVVSMLNLAK…LHYIDNLDAK (117 aa)).

This sequence belongs to the YhaM family.

Functionally, shows a 3'-5' exoribonuclease activity. In Bacillus licheniformis (strain ATCC 14580 / DSM 13 / JCM 2505 / CCUG 7422 / NBRC 12200 / NCIMB 9375 / NCTC 10341 / NRRL NRS-1264 / Gibson 46), this protein is 3'-5' exoribonuclease YhaM.